The primary structure comprises 1793 residues: Transposon Ty1-H Gag-Pol polyprotein (1793 aa).

3 stretches are compositionally biased toward polar residues: residues 1 to 10, 48 to 60, and 127 to 152; these read MESQQLSNYP, TKAN…TPAS, and QSQF…GNTF. Disordered stretches follow at residues 1 to 84, 126 to 174, and 390 to 459; these read MESQ…QNGP, PQSQ…PPPM, and GSRN…SKST. A compositionally biased stretch (low complexity) spans 153–165; sequence TDSSSADSDMTST. The RNA-binding stretch occupies residues 337–439; it reads NNGIHINNKV…NSKSKTARAH (103 aa). Residues 440–456 show a composition bias toward low complexity; the sequence is NVSTSNNSPSTDNDSIS. D499 acts as the For protease activity; shared with dimeric partner in catalysis. The interval 621–678 is integrase-type zinc finger-like; it reads NVHTSESTRKYPYPFIHRMLAHANAQTIRYSLKNNTITYFNESDVDWSSAIDYQCPDC. Residues 698–873 enclose the Integrase catalytic domain; it reads NSYEPFQYLH…AGLDISTLLP (176 aa). Mg(2+) contacts are provided by D709 and D774. The segment at 996 to 1208 is disordered; it reads AVSPTDSTPP…SSLGGIGDSN (213 aa). Over residues 998 to 1007 the composition is skewed to low complexity; that stretch reads SPTDSTPPST. Residues 1043 to 1053 are compositionally biased toward polar residues; sequence STPQISDIEST. The segment covering 1076-1091 has biased composition (basic and acidic residues); it reads ESSHASKSKDFRHSDS. 2 stretches are compositionally biased toward polar residues: residues 1092–1120 and 1133–1144; these read YSDN…QTSE and SIDTSSSESNSL. Residues 1216–1250 carry the Bipartite nuclear localization signal motif; the sequence is KKRSLEDNETEIKVSRDTWNTKNMRSLEPPRSKKR. The region spanning 1376-1514 is the Reverse transcriptase Ty1/copia-type domain; it reads NNYYITQLDI…DILGLEIKYQ (139 aa). The Mg(2+) site is built by D1384, D1465, D1466, D1648, E1690, and D1723. The region spanning 1648-1790 is the RNase H Ty1/copia-type domain; sequence DASYGNQPYY…IKTFKLLTNK (143 aa).

As to quaternary structure, the capsid protein forms a homotrimer, from which the VLPs are assembled. The protease is a homodimer, whose active site consists of two apposed aspartic acid residues. Post-translationally, initially, virus-like particles (VLPs) are composed of the structural unprocessed proteins Gag and Gag-Pol, and also contain the host initiator methionine tRNA (tRNA(i)-Met) which serves as a primer for minus-strand DNA synthesis, and a dimer of genomic Ty RNA. Processing of the polyproteins occurs within the particle and proceeds by an ordered pathway, called maturation. First, the protease (PR) is released by autocatalytic cleavage of the Gag-Pol polyprotein yielding capsid protein p45 and a Pol-p154 precursor protein. This cleavage is a prerequisite for subsequent processing of Pol-p154 at the remaining sites to release the mature structural and catalytic proteins. Maturation takes place prior to the RT reaction and is required to produce transposition-competent VLPs.

The protein localises to the cytoplasm. It is found in the nucleus. It catalyses the reaction DNA(n) + a 2'-deoxyribonucleoside 5'-triphosphate = DNA(n+1) + diphosphate. The catalysed reaction is Endonucleolytic cleavage to 5'-phosphomonoester.. In terms of biological role, capsid protein (CA) is the structural component of the virus-like particle (VLP), forming the shell that encapsulates the retrotransposons dimeric RNA genome. The particles are assembled from trimer-clustered units and there are holes in the capsid shells that allow for the diffusion of macromolecules. CA also has nucleocapsid-like chaperone activity, promoting primer tRNA(i)-Met annealing to the multipartite primer-binding site (PBS), dimerization of Ty1 RNA and initiation of reverse transcription. The aspartyl protease (PR) mediates the proteolytic cleavages of the Gag and Gag-Pol polyproteins after assembly of the VLP. Its function is as follows. Reverse transcriptase/ribonuclease H (RT) is a multifunctional enzyme that catalyzes the conversion of the retro-elements RNA genome into dsDNA within the VLP. The enzyme displays a DNA polymerase activity that can copy either DNA or RNA templates, and a ribonuclease H (RNase H) activity that cleaves the RNA strand of RNA-DNA heteroduplexes during plus-strand synthesis and hydrolyzes RNA primers. The conversion leads to a linear dsDNA copy of the retrotransposon that includes long terminal repeats (LTRs) at both ends. Functionally, integrase (IN) targets the VLP to the nucleus, where a subparticle preintegration complex (PIC) containing at least integrase and the newly synthesized dsDNA copy of the retrotransposon must transit the nuclear membrane. Once in the nucleus, integrase performs the integration of the dsDNA into the host genome. The sequence is that of Transposon Ty1-H Gag-Pol polyprotein (TY1B-H) from Saccharomyces cerevisiae (strain ATCC 204508 / S288c) (Baker's yeast).